Consider the following 425-residue polypeptide: Dihydroorotase (425 aa).

2 residues coordinate Zn(2+): His-56 and His-58. Residues His-58–Arg-60 and Asn-90 contribute to the substrate site. 3 residues coordinate Zn(2+): Asp-147, His-174, and His-227. Asn-273 is a binding site for substrate. Asp-300 is a binding site for Zn(2+). Asp-300 is a catalytic residue. Substrate is bound by residues His-304 and Phe-318–Gly-319.

This sequence belongs to the metallo-dependent hydrolases superfamily. DHOase family. Class I DHOase subfamily. It depends on Zn(2+) as a cofactor.

It catalyses the reaction (S)-dihydroorotate + H2O = N-carbamoyl-L-aspartate + H(+). It functions in the pathway pyrimidine metabolism; UMP biosynthesis via de novo pathway; (S)-dihydroorotate from bicarbonate: step 3/3. Functionally, catalyzes the reversible cyclization of carbamoyl aspartate to dihydroorotate. This is Dihydroorotase from Fusobacterium nucleatum subsp. nucleatum (strain ATCC 25586 / DSM 15643 / BCRC 10681 / CIP 101130 / JCM 8532 / KCTC 2640 / LMG 13131 / VPI 4355).